The following is a 130-amino-acid chain: Small ribosomal subunit protein uS8 (130 aa).

The protein belongs to the universal ribosomal protein uS8 family. Part of the 30S ribosomal subunit.

One of the primary rRNA binding proteins, it binds directly to 16S rRNA central domain where it helps coordinate assembly of the platform of the 30S subunit. This chain is Small ribosomal subunit protein uS8, found in Pyrobaculum arsenaticum (strain DSM 13514 / JCM 11321 / PZ6).